The sequence spans 81 residues: ATP synthase subunit c, chloroplastic (81 aa).

A run of 2 helical transmembrane segments spans residues Ala-3–Gly-23 and Leu-57–Ala-77.

Belongs to the ATPase C chain family. F-type ATPases have 2 components, F(1) - the catalytic core - and F(0) - the membrane proton channel. F(1) has five subunits: alpha(3), beta(3), gamma(1), delta(1), epsilon(1). F(0) has four main subunits: a(1), b(1), b'(1) and c(10-14). The alpha and beta chains form an alternating ring which encloses part of the gamma chain. F(1) is attached to F(0) by a central stalk formed by the gamma and epsilon chains, while a peripheral stalk is formed by the delta, b and b' chains.

Its subcellular location is the plastid. It is found in the chloroplast thylakoid membrane. Functionally, f(1)F(0) ATP synthase produces ATP from ADP in the presence of a proton or sodium gradient. F-type ATPases consist of two structural domains, F(1) containing the extramembraneous catalytic core and F(0) containing the membrane proton channel, linked together by a central stalk and a peripheral stalk. During catalysis, ATP synthesis in the catalytic domain of F(1) is coupled via a rotary mechanism of the central stalk subunits to proton translocation. Its function is as follows. Key component of the F(0) channel; it plays a direct role in translocation across the membrane. A homomeric c-ring of between 10-14 subunits forms the central stalk rotor element with the F(1) delta and epsilon subunits. The polypeptide is ATP synthase subunit c, chloroplastic (Cyanidioschyzon merolae (strain NIES-3377 / 10D) (Unicellular red alga)).